Reading from the N-terminus, the 657-residue chain is Keratinocyte proline-rich protein (657 aa).

Disordered regions lie at residues Gln-285–Arg-320, His-425–Glu-493, and Gln-517–Pro-568. Low complexity predominate over residues Thr-292–Arg-302. Positions Gln-434–Arg-444 are enriched in basic and acidic residues. At Ser-442 the chain carries Phosphoserine. 3 stretches are compositionally biased toward pro residues: residues Val-449 to Glu-493, Gln-517 to Pro-530, and Gly-539 to Ser-561.

Its subcellular location is the cytoplasm. This is Keratinocyte proline-rich protein from Mus musculus (Mouse).